Consider the following 176-residue polypeptide: NAD(P)H-quinone oxidoreductase subunit 6, chloroplastic (176 aa).

Transmembrane regions (helical) follow at residues 10-30, 33-53, 61-81, 92-112, and 152-172; these read FLLV…VLLT, IYSA…HIPA, AQLL…VMFM, LWTV…VSLI, and FFLP…GAIA.

It belongs to the complex I subunit 6 family. As to quaternary structure, NDH is composed of at least 16 different subunits, 5 of which are encoded in the nucleus.

Its subcellular location is the plastid. The protein resides in the chloroplast thylakoid membrane. The enzyme catalyses a plastoquinone + NADH + (n+1) H(+)(in) = a plastoquinol + NAD(+) + n H(+)(out). The catalysed reaction is a plastoquinone + NADPH + (n+1) H(+)(in) = a plastoquinol + NADP(+) + n H(+)(out). NDH shuttles electrons from NAD(P)H:plastoquinone, via FMN and iron-sulfur (Fe-S) centers, to quinones in the photosynthetic chain and possibly in a chloroplast respiratory chain. The immediate electron acceptor for the enzyme in this species is believed to be plastoquinone. Couples the redox reaction to proton translocation, and thus conserves the redox energy in a proton gradient. The polypeptide is NAD(P)H-quinone oxidoreductase subunit 6, chloroplastic (ndhG) (Nandina domestica (Heavenly bamboo)).